A 396-amino-acid polypeptide reads, in one-letter code: Putative protein IntB (396 aa).

Positions 71 to 151 (RTFKEVAIEW…RTTAIMRYAV (81 aa)) constitute a Core-binding (CB) domain. Positions 174–367 (QHRPALELKR…EHLEERRLML (194 aa)) constitute a Tyr recombinase domain. Catalysis depends on residues arginine 213, lysine 252, histidine 316, arginine 319, and histidine 343. Tyrosine 353 serves as the catalytic O-(3'-phospho-DNA)-tyrosine intermediate.

This sequence belongs to the 'phage' integrase family.

In Escherichia coli (strain K12), this protein is Putative protein IntB (intB).